Here is a 205-residue protein sequence, read N- to C-terminus: Protein Nef (205 aa).

Gly2 carries the N-myristoyl glycine; by host lipid modification. Phosphoserine; by host is present on Ser6. The tract at residues 62 to 65 (EEGD) is acidic; interacts with host PACS1 and PACS2; stabilizes the interaction of NEF/MHC-I with host AP1M1; necessary for MHC-I internalization. An SH3-binding; interaction with Src family tyrosine kinases region spans residues 69-78 (PVRPQVPLRP). The PxxP; stabilizes the interaction of NEF/MHC-I with host AP1M1; necessary for MHC-I internalization signature appears at 72-75 (PQVP). The mediates dimerization, Nef-PTE1 interaction stretch occupies residues 108-124 (EILDLWVYHTQGFFPDW). The interval 148–180 (VDPAEVEEATGGENNSLLHPICQHGVDDEEKEV) is binding to ATP6V1H. The Dileucine internalization motif; necessary for CD4 internalization signature appears at 164 to 165 (LL). Residues 174–175 (DD) carry the Diacidic; necessary for CD4 internalization motif.

It belongs to the lentivirus primate group Nef protein family. Monomer; cytosolic form. Homodimer; membrane bound form. Interacts with Nef associated p21-activated kinase (PAK2); this interaction activates PAK2. Associates with the Nef-MHC-I-AP1 complex; this complex is required for MHC-I internalization. Interacts (via C-terminus) with host PI3-kinase. Interacts with host PACS1; this interaction seems to be weak. Interacts with host PACS2. Interacts with host LCK and MAPK3; these interactions inhibit the kinase activity of the latter. Interacts with host ATP6V1H; this interaction may play a role in CD4 endocytosis. Associates with the CD4-Nef-AP2 complex; this complex is required for CD4 internalization. Interacts with host AP2 subunit alpha and AP2 subunit sigma2. Interacts with TCR-zeta chain; this interaction up-regulates the Fas ligand (FasL) surface expression. Interacts with host HCK, LYN, and SRC; these interactions activate the Src family kinases. Interacts with MAP3K5; this interaction inhibits the Fas and TNFR-mediated death signals. Interacts with beta-COP and PTE1. Interacts with human RACK1; this increases Nef phosphorylation by PKC. Interacts with TP53; this interaction decreases the half-life of TP53, protecting the infected cell against p53-mediated apoptosis. In terms of processing, the virion-associated Nef proteins are cleaved by the viral protease to release the soluble C-terminal core protein. Nef is probably cleaved concomitantly with viral structural proteins on maturation of virus particles. Myristoylated. Post-translationally, phosphorylated on serine residues, probably by host PKCdelta and theta.

It localises to the host cell membrane. It is found in the virion. The protein localises to the secreted. The protein resides in the host Golgi apparatus membrane. Factor of infectivity and pathogenicity, required for optimal virus replication. Alters numerous pathways of T-lymphocyte function and down-regulates immunity surface molecules in order to evade host defense and increase viral infectivity. Alters the functionality of other immunity cells, like dendritic cells, monocytes/macrophages and NK cells. Functionally, in infected CD4(+) T-lymphocytes, down-regulates the surface MHC-I, mature MHC-II, CD4, CD28, CCR5 and CXCR4 molecules. Mediates internalization and degradation of host CD4 through the interaction of with the cytoplasmic tail of CD4, the recruitment of AP-2 (clathrin adapter protein complex 2), internalization through clathrin coated pits, and subsequent transport to endosomes and lysosomes for degradation. Diverts host MHC-I molecules to the trans-Golgi network-associated endosomal compartments by an endocytic pathway to finally target them for degradation. MHC-I down-regulation may involve AP-1 (clathrin adapter protein complex 1) or possibly Src family kinase-ZAP70/Syk-PI3K cascade recruited by PACS2. In consequence infected cells are masked for immune recognition by cytotoxic T-lymphocytes. Decreasing the number of immune receptors also prevents reinfection by more HIV particles (superinfection). Down-regulates host SERINC3 and SERINC5 thereby excluding these proteins from the viral particles. Virion infectivity is drastically higher when SERINC3 or SERINC5 are excluded from the viral envelope, because these host antiviral proteins impair the membrane fusion event necessary for subsequent virion penetration. Its function is as follows. Bypasses host T-cell signaling by inducing a transcriptional program nearly identical to that of anti-CD3 cell activation. Interaction with TCR-zeta chain up-regulates the Fas ligand (FasL). Increasing surface FasL molecules and decreasing surface MHC-I molecules on infected CD4(+) cells send attacking cytotoxic CD8+ T-lymphocytes into apoptosis. In terms of biological role, plays a role in optimizing the host cell environment for viral replication without causing cell death by apoptosis. Protects the infected cells from apoptosis in order to keep them alive until the next virus generation is ready to strike. Inhibits the Fas and TNFR-mediated death signals by blocking MAP3K5/ASK1. Decreases the half-life of TP53, protecting the infected cell against p53-mediated apoptosis. Inhibits the apoptotic signals regulated by the Bcl-2 family proteins through the formation of a Nef/PI3-kinase/PAK2 complex that leads to activation of PAK2 and induces phosphorylation of host BAD. Extracellular Nef protein targets CD4(+) T-lymphocytes for apoptosis by interacting with CXCR4 surface receptors. The sequence is that of Protein Nef from Human immunodeficiency virus type 1 group M subtype A (isolate U455) (HIV-1).